We begin with the raw amino-acid sequence, 130 residues long: Small ribosomal subunit protein uS8 (130 aa).

The protein belongs to the universal ribosomal protein uS8 family. In terms of assembly, part of the 30S ribosomal subunit.

Functionally, one of the primary rRNA binding proteins, it binds directly to 16S rRNA central domain where it helps coordinate assembly of the platform of the 30S subunit. The sequence is that of Small ribosomal subunit protein uS8 from Methanocorpusculum labreanum (strain ATCC 43576 / DSM 4855 / Z).